The following is an 824-amino-acid chain: Kinesin-like protein KIFC3 (824 aa).

The tract at residues 27-79 is disordered; it reads EPKPGMARPAPASPAARPFPHTGQGRLRTGRGKDILPSGEEDSTSRTAARPSL. The span at 33–46 shows a compositional bias: low complexity; sequence ARPAPASPAARPFP. Coiled coils occupy residues 100 to 360 and 393 to 430; these read LTVQ…ENLA and LLQE…LQLR. The 324-residue stretch at 443–766 folds into the Kinesin motor domain; sequence NIRVIARVRP…LRFAERVRSV (324 aa). 526-533 serves as a coordination point for ATP; sequence GQTGAGKT. A disordered region spans residues 771–824; it reads GSRRTELGSWSSQEHLEWEPACQTPQPTARAHSAPGSGTSSRPGSIRRKLQPSA. Ser-811 and Ser-815 each carry phosphoserine. Residues 815–824 show a composition bias toward basic residues; it reads SIRRKLQPSA.

The protein belongs to the TRAFAC class myosin-kinesin ATPase superfamily. Kinesin family. As to quaternary structure, interacts with annexin XIIIB. In terms of tissue distribution, predominant expression in the kidney, testis and ovary. Also expressed in brain, heart, liver, lung and uterus.

The protein localises to the cytoplasm. It is found in the cytoskeleton. It localises to the cytoplasmic vesicle membrane. The protein resides in the cell junction. Its subcellular location is the adherens junction. The protein localises to the microtubule organizing center. It is found in the centrosome. Minus-end microtubule-dependent motor protein. Involved in apically targeted transport. Required for zonula adherens maintenance. This is Kinesin-like protein KIFC3 (Kifc3) from Mus musculus (Mouse).